Consider the following 341-residue polypeptide: Nucleoid-associated protein Sden_2335 (341 aa).

It belongs to the YejK family.

It localises to the cytoplasm. The protein resides in the nucleoid. The protein is Nucleoid-associated protein Sden_2335 of Shewanella denitrificans (strain OS217 / ATCC BAA-1090 / DSM 15013).